Here is a 241-residue protein sequence, read N- to C-terminus: Eukaryotic translation initiation factor 3 subunit J (241 aa).

The segment at 1–97 (MEEDWEQLSE…EEEDMTPEQK (97 aa)) is disordered. The segment covering 28-45 (GEDEEEEVKDSWEDEDEL) has biased composition (acidic residues). A coiled-coil region spans residues 31–119 (EEEEVKDSWE…ESDLKNALDT (89 aa)). 2 stretches are compositionally biased toward basic and acidic residues: residues 46–58 (EEKK…ETPK) and 69–87 (IADK…RLEK).

The protein belongs to the eIF-3 subunit J family. Component of the eukaryotic translation initiation factor 3 (eIF-3) complex.

It is found in the cytoplasm. In terms of biological role, component of the eukaryotic translation initiation factor 3 (eIF-3) complex, which is involved in protein synthesis of a specialized repertoire of mRNAs and, together with other initiation factors, stimulates binding of mRNA and methionyl-tRNAi to the 40S ribosome. The eIF-3 complex specifically targets and initiates translation of a subset of mRNAs involved in cell proliferation. This is Eukaryotic translation initiation factor 3 subunit J from Aedes aegypti (Yellowfever mosquito).